We begin with the raw amino-acid sequence, 114 residues long: Large ribosomal subunit protein bL20 (114 aa).

The protein belongs to the bacterial ribosomal protein bL20 family.

Functionally, binds directly to 23S ribosomal RNA and is necessary for the in vitro assembly process of the 50S ribosomal subunit. It is not involved in the protein synthesizing functions of that subunit. The protein is Large ribosomal subunit protein bL20 of Parabacteroides distasonis (strain ATCC 8503 / DSM 20701 / CIP 104284 / JCM 5825 / NCTC 11152).